The sequence spans 109 residues: Flagellar hook-basal body complex protein FliE (109 aa).

It belongs to the FliE family.

It is found in the bacterial flagellum basal body. The chain is Flagellar hook-basal body complex protein FliE from Nitrosomonas eutropha (strain DSM 101675 / C91 / Nm57).